A 501-amino-acid polypeptide reads, in one-letter code: AKT kinase-transforming protein (501 aa).

The region spanning 26–129 (AIVKEGWLHK…WATAIQTVAD (104 aa)) is the PH domain. Positions 135 to 158 (EEETMDFRSGSPSDNSGAEEMEVS) are disordered. Residues 171-429 (FEYLKLLGKG…AKEIMQHRFF (259 aa)) enclose the Protein kinase domain. Residues 177-185 (LGKGTFGKV) and Lys200 contribute to the ATP site. Asp295 acts as the Proton acceptor in catalysis. The residue at position 347 (Tyr347) is a Phosphotyrosine. The AGC-kinase C-terminal domain maps to 430 to 501 (ANIVWQDVYE…QFSYSASGTA (72 aa)). Positions 471 to 501 (TPPDQDDSMECVDSERRPHFPQFSYSASGTA) are disordered.

This sequence belongs to the protein kinase superfamily. AGC Ser/Thr protein kinase family. RAC subfamily. Interacts with mouse THEM4. Post-translationally, autophosphorylated on threonine and serine residues.

The enzyme catalyses L-seryl-[protein] + ATP = O-phospho-L-seryl-[protein] + ADP + H(+). The catalysed reaction is L-threonyl-[protein] + ATP = O-phospho-L-threonyl-[protein] + ADP + H(+). The sequence is that of AKT kinase-transforming protein (V-AKT) from Mus musculus (Mouse).